Reading from the N-terminus, the 262-residue chain is Aconitate isomerase (262 aa).

The first 22 residues, Met-1 to Ala-22, serve as a signal peptide directing secretion.

As to quaternary structure, monomer.

The enzyme catalyses trans-aconitate = cis-aconitate. Activated more than 1.5 fold by Ca(2+), Mg(2+), Mn(2+), Ni(2+), Fe(2+), DDT and 1,10-phenanthroline. Strongly inhibited by Ag(+) and Hg(+). Inhibited by addition of 20% (v/v) glycerol. No effect by addition of NADH or NADPH. Its function is as follows. Involved in assimilation of trans-aconitic acid. Preference for cis-aconitic acid is 14-fold higher than for trans-aconitic acid. Not active on intermediates of tricarboxylic acid (TCA) cycle including citric acid, succinic acid, fumaric acid, and 2-oxoglutaric acid or on other dicarboxilic acids including itaconic acid, formic acid, citraconic acid or maleic acid. In Pseudomonas sp, this protein is Aconitate isomerase.